The following is a 292-amino-acid chain: Aspartate carbamoyltransferase catalytic subunit (292 aa).

Arginine 50 and threonine 51 together coordinate carbamoyl phosphate. Residue lysine 78 coordinates L-aspartate. Residues arginine 100, histidine 128, and glutamine 131 each coordinate carbamoyl phosphate. L-aspartate-binding residues include arginine 161 and arginine 211. Residues glycine 250 and proline 251 each coordinate carbamoyl phosphate.

This sequence belongs to the aspartate/ornithine carbamoyltransferase superfamily. ATCase family. As to quaternary structure, heterododecamer (2C3:3R2) of six catalytic PyrB chains organized as two trimers (C3), and six regulatory PyrI chains organized as three dimers (R2).

The catalysed reaction is carbamoyl phosphate + L-aspartate = N-carbamoyl-L-aspartate + phosphate + H(+). It functions in the pathway pyrimidine metabolism; UMP biosynthesis via de novo pathway; (S)-dihydroorotate from bicarbonate: step 2/3. Functionally, catalyzes the condensation of carbamoyl phosphate and aspartate to form carbamoyl aspartate and inorganic phosphate, the committed step in the de novo pyrimidine nucleotide biosynthesis pathway. This is Aspartate carbamoyltransferase catalytic subunit from Nitratiruptor sp. (strain SB155-2).